A 141-amino-acid chain; its full sequence is Flagellar assembly factor FliW (141 aa).

Belongs to the FliW family. As to quaternary structure, interacts with translational regulator CsrA and flagellin(s).

It localises to the cytoplasm. Functionally, acts as an anti-CsrA protein, binds CsrA and prevents it from repressing translation of its target genes, one of which is flagellin. Binds to flagellin and participates in the assembly of the flagellum. The polypeptide is Flagellar assembly factor FliW (Clostridium acetobutylicum (strain ATCC 824 / DSM 792 / JCM 1419 / IAM 19013 / LMG 5710 / NBRC 13948 / NRRL B-527 / VKM B-1787 / 2291 / W)).